Here is a 188-residue protein sequence, read N- to C-terminus: MAKVLATEIRVGNLIEWDKRIWRVLKCYHVHVGGRGGAFMQVEMKDIEAGTKTNQRIRTEDKVERAFVEPREMTFLYQEGDNYIFMDKENYEQLSLSRDFLEGQYEYLLPNTDVQVNFHNDRAIGVQLPASVVLTITDTEPNLKGATATSSYKPATTETGLVVMVPPFVLQGERIKVNTDSGEYIERM.

The protein belongs to the elongation factor P family.

Its subcellular location is the cytoplasm. The protein operates within protein biosynthesis; polypeptide chain elongation. Its function is as follows. Involved in peptide bond synthesis. Stimulates efficient translation and peptide-bond synthesis on native or reconstituted 70S ribosomes in vitro. Probably functions indirectly by altering the affinity of the ribosome for aminoacyl-tRNA, thus increasing their reactivity as acceptors for peptidyl transferase. The polypeptide is Elongation factor P (Nitrosospira multiformis (strain ATCC 25196 / NCIMB 11849 / C 71)).